A 30-amino-acid polypeptide reads, in one-letter code: 2-enoate reductase (30 aa).

Dodecamer; tetramer of trimers. Iron-sulfur cluster serves as cofactor. FAD is required as a cofactor. It depends on FMN as a cofactor.

The enzyme catalyses butanoate + NAD(+) = (2E)-2-butenoate + NADH + H(+). Its function is as follows. Involved in fermentation of amino acids (Stickland reaction) such as leucine, isoleucine, valine and phenylalanine. In Clostridium tyrobutyricum, this protein is 2-enoate reductase.